Reading from the N-terminus, the 305-residue chain is uncharacterized protein (305 aa).

It belongs to the ADP-ribosylglycohydrolase family.

This is an uncharacterized protein from Archaeoglobus fulgidus (strain ATCC 49558 / DSM 4304 / JCM 9628 / NBRC 100126 / VC-16).